A 422-amino-acid chain; its full sequence is Glutamyl-tRNA reductase (422 aa).

Residues 49-52 (TCNR), S107, 112-114 (EPQ), and Q118 contribute to the substrate site. The Nucleophile role is filled by C50. 187–192 (GAGETI) is an NADP(+) binding site.

This sequence belongs to the glutamyl-tRNA reductase family. In terms of assembly, homodimer.

The enzyme catalyses (S)-4-amino-5-oxopentanoate + tRNA(Glu) + NADP(+) = L-glutamyl-tRNA(Glu) + NADPH + H(+). Its pathway is porphyrin-containing compound metabolism; protoporphyrin-IX biosynthesis; 5-aminolevulinate from L-glutamyl-tRNA(Glu): step 1/2. Catalyzes the NADPH-dependent reduction of glutamyl-tRNA(Glu) to glutamate 1-semialdehyde (GSA). The chain is Glutamyl-tRNA reductase from Pseudomonas paraeruginosa (strain DSM 24068 / PA7) (Pseudomonas aeruginosa (strain PA7)).